Reading from the N-terminus, the 397-residue chain is 2-acyl-1-lysophosphatidylinositol acyltransferase (397 aa).

Positions 112–117 (HQIYTD) match the HXXXXD motif motif.

It belongs to the 1-acyl-sn-glycerol-3-phosphate acyltransferase family.

It localises to the lipid droplet. It carries out the reaction 1-heptadecanoyl-sn-glycero-3-phosphate + octadecanoyl-CoA = 1-heptadecanoyl-2-octadecanoyl-sn-glycero-3-phosphate + CoA. The catalysed reaction is 1-heptadecanoyl-sn-glycero-3-phosphate + tetradecanoyl-CoA = 1-heptadecanoyl-2-tetradecanoyl-sn-glycero-3-phosphate + CoA. The enzyme catalyses 1-heptadecanoyl-sn-glycero-3-phosphate + hexadecanoyl-CoA = 1-heptadecanoyl-2-hexadecanoyl-sn-glycero-3-phosphate + CoA. Acyltransferase with lysophosphatidic acid acyltransferase (LPAAT) activity. Fatty acyl substrates include 18:0-acyl-CoA, 16:0-acyl-CoA, 17:0-acyl-CoA and 14:0-acyl-CoA. Responsible for the acyl-CoA-dependent introduction of saturated very long chain fatty acids (VLCFAs) into phosphatidylinositol, transferring saturated FAs with 18 to 26 carbon atoms. Responsible for the incorporation of stearate into phosphatidylinositol. Overexpression has an effect on chromosome stability. Regulates phosphorylation and expression of glycerol-3-phosphate acyltransferase SCT1. The protein is 2-acyl-1-lysophosphatidylinositol acyltransferase of Saccharomyces cerevisiae (strain ATCC 204508 / S288c) (Baker's yeast).